Consider the following 498-residue polypeptide: Fascin-3 (498 aa).

It belongs to the fascin family. Expressed in testis.

It localises to the cytoplasm. Its subcellular location is the cytoskeleton. Functionally, acts as an actin bundling protein. This is Fascin-3 (Fscn3) from Mus musculus (Mouse).